Reading from the N-terminus, the 589-residue chain is Protein FAM161B (589 aa).

Disordered regions lie at residues methionine 1–tryptophan 166, lysine 265–proline 297, and alanine 386–serine 444. Acidic residues predominate over residues proline 92–glutamate 106. The segment covering threonine 151 to tryptophan 166 has biased composition (polar residues). Positions lysine 265 to glutamine 275 are enriched in basic and acidic residues. Residues serine 287–proline 297 show a composition bias toward basic residues. Basic and acidic residues predominate over residues alanine 386–arginine 396. Residues glutamate 510 to glutamate 577 are a coiled coil.

This sequence belongs to the FAM161 family. Interacts with FAM161A.

This is Protein FAM161B (Fam161b) from Mus musculus (Mouse).